The sequence spans 277 residues: Large ribosomal subunit protein uL2 (277 aa).

The segment at 218–277 (PTVRGSVMNPNDHPHGGGEGKSPIGHPSPLTPWGKPALGYKTRKNKKYSDGMIIKRRGQK) is disordered.

It belongs to the universal ribosomal protein uL2 family. Part of the 50S ribosomal subunit. Forms a bridge to the 30S subunit in the 70S ribosome.

One of the primary rRNA binding proteins. Required for association of the 30S and 50S subunits to form the 70S ribosome, for tRNA binding and peptide bond formation. It has been suggested to have peptidyltransferase activity; this is somewhat controversial. Makes several contacts with the 16S rRNA in the 70S ribosome. This is Large ribosomal subunit protein uL2 from Clostridium novyi (strain NT).